The following is a 74-amino-acid chain: Anionic peptide clone 10 (74 aa).

A signal peptide spans 1-24 (MVSKSLIVLLLVSVLVSTFFTTEA).

Belongs to the non-disulfide-bridged peptide (NDBP) superfamily. Long chain multifunctional peptide (group 2) family. Expressed by the venom gland.

It is found in the secreted. Functionally, may be an antimicrobial peptide. The sequence is that of Anionic peptide clone 10 from Tityus costatus (Brazilian scorpion).